The sequence spans 1148 residues: Zinc finger CCCH domain-containing protein 18 (1148 aa).

Positions methionine 1 to serine 13 are enriched in low complexity. Disordered regions lie at residues methionine 1 to arginine 315, aspartate 380 to proline 417, and tyrosine 521 to leucine 1127. Composition is skewed to basic and acidic residues over residues valine 53 to glutamate 73 and glutamate 82 to glutamine 96. Acidic residues-rich tracts occupy residues glutamate 144–glutamate 156 and glutamate 167–glutamate 176. Basic and acidic residues predominate over residues aspartate 190 to aspartate 202. Composition is skewed to acidic residues over residues glutamate 203–glutamate 214 and glutamate 233–glutamate 245. Basic and acidic residues predominate over residues aspartate 261 to glutamate 289. Residues aspartate 290 to glutamate 306 are compositionally biased toward acidic residues. The span at proline 388–proline 397 shows a compositional bias: gly residues. Positions proline 530 to leucine 615 are enriched in basic and acidic residues. Positions arginine 543–arginine 584 form a coiled coil. Over residues asparagine 622–proline 631 the composition is skewed to pro residues. Positions proline 632 to glutamate 646 are enriched in basic and acidic residues. Phosphoserine is present on serine 666. The span at serine 677 to proline 740 shows a compositional bias: low complexity. Composition is skewed to pro residues over residues lysine 783–proline 800 and proline 807–proline 817. A compositionally biased stretch (basic and acidic residues) spans glycine 818–lysine 833. Low complexity-rich tracts occupy residues valine 847–serine 875, serine 882–serine 903, and alanine 914–proline 925. Basic and acidic residues-rich tracts occupy residues aspartate 933 to aspartate 964 and glutamine 1012 to proline 1029. A Phosphoserine modification is found at serine 1056. Low complexity-rich tracts occupy residues proline 1083–lysine 1098 and glycine 1107–serine 1119. Residues serine 1118–proline 1146 are a coiled coil.

It is found in the nucleus. The polypeptide is Zinc finger CCCH domain-containing protein 18 (zc3h18) (Danio rerio (Zebrafish)).